Reading from the N-terminus, the 504-residue chain is Ectoine/proline transporter ProP (504 aa).

The next 11 membrane-spanning stretches (helical) occupy residues 41–61 (FMEWYDFGIYGYLTVTMTAVF), 71–91 (LLAVMFGFAVSYLVRPLGGLV), 118–138 (LIGLLPTAASIGAWALVLLYL), 169–189 (FFGAFLDMGSYLGFAAGASVV), 207–227 (DFGWRIPFLTAIPLGIIAVYL), 272–292 (LLIGIAIVAATNTAGYALTSY), 309–329 (AAVTVPILVVMSLLLPFVGMW), 337–357 (PVYATAVAATLILMVPAFLIM), 362–382 (IGAVLIALSMVAIPTGLYVAL), 399–419 (GMGISYNISVSLFGGTTPLIT), and 430–450 (IVPALYIMFFSAIAGVALLFM). The interval 477 to 504 (NQDEDPNIDLSHMPFPDEENVGAEKQNA) is disordered.

It belongs to the major facilitator superfamily.

The protein localises to the cell membrane. Its activity is regulated as follows. Uptake is activated by osmotic stress. Inhibited by CCCP. Functionally, involved in the uptake of osmoprotectants. Can transport ectoine and proline. Protons are probably the coupling ions. The sequence is that of Ectoine/proline transporter ProP from Corynebacterium glutamicum (strain ATCC 13032 / DSM 20300 / JCM 1318 / BCRC 11384 / CCUG 27702 / LMG 3730 / NBRC 12168 / NCIMB 10025 / NRRL B-2784 / 534).